The following is a 373-amino-acid chain: Thyroid hormone receptor beta (373 aa).

Positions 1–18 (MPSSMSGYIPSYLDKDEL) are modulating. Residues C19, C22, C36, C39, C57, C63, C73, and C76 each coordinate Zn(2+). 2 NR C4-type zinc fingers span residues 19-39 (CVVC…CEGC) and 57-81 (CKYE…FKKC). The segment at residues 19-93 (CVVCGDKATG…VGMATDLVLD (75 aa)) is a DNA-binding region (nuclear receptor). One can recognise an NR LBD domain in the interval 129–373 (EEWELIQVVT…PPLFLEVFED (245 aa)). 3 residues coordinate 3,3',5-triiodo-L-thyronine: R194, N243, and H347. Residues R194, N243, and H347 each contribute to the L-thyroxine site.

Belongs to the nuclear hormone receptor family. NR1 subfamily.

It is found in the nucleus. Functionally, nuclear hormone receptor that can act as a repressor or activator of transcription. High affinity receptor for thyroid hormones, including triiodothyronine and thyroxine. This is Thyroid hormone receptor beta (thrb) from Aquarana catesbeiana (American bullfrog).